The primary structure comprises 230 residues: Large ribosomal subunit protein uL1 (230 aa).

This sequence belongs to the universal ribosomal protein uL1 family. Part of the 50S ribosomal subunit.

Binds directly to 23S rRNA. The L1 stalk is quite mobile in the ribosome, and is involved in E site tRNA release. In terms of biological role, protein L1 is also a translational repressor protein, it controls the translation of the L11 operon by binding to its mRNA. This Thermoanaerobacter sp. (strain X514) protein is Large ribosomal subunit protein uL1.